A 232-amino-acid polypeptide reads, in one-letter code: Zinc-finger homeodomain protein 5 (232 aa).

A compositionally biased stretch (acidic residues) spans 1-11 (MELSEHEEDAG). The interval 1–25 (MELSEHEEDAGDVGGGCSSPPTPPH) is disordered. A ZF-HD dimerization-type; degenerate zinc finger spans residues 40-86 (YHECLRNHAAASGGHVVDGCGEFMPASTEEPLACAACGCHRSFHRRD). A disordered region spans residues 126 to 170 (GLPFPGYGTPSGGTGTTTASSSDERLRPSPVQPRRRSRTTFTREQ). The segment at residues 159-222 (RRRSRTTFTR…NNKHSFKQKQ (64 aa)) is a DNA-binding region (homeobox).

Homo- and heterodimer with other ZFHD proteins.

Its subcellular location is the nucleus. Putative transcription factor. This Oryza sativa subsp. indica (Rice) protein is Zinc-finger homeodomain protein 5 (ZHD5).